The sequence spans 383 residues: GTP-binding protein 10 homolog (383 aa).

The 136-residue stretch at 22–157 (PTFLDTLRLA…RTVNLDLKLI (136 aa)) folds into the Obg domain. Residues 158–353 (ADVGLVGFPN…VKSQLRRTLV (196 aa)) form the OBG-type G domain. Residues 164-171 (GFPNAGKS), 211-215 (DLPGL), and 287-290 (NKMD) each bind GTP.

The protein belongs to the TRAFAC class OBG-HflX-like GTPase superfamily. OBG GTPase family.

The protein resides in the nucleus. It is found in the nucleolus. Functionally, may be involved in the ribosome maturation process. This is GTP-binding protein 10 homolog from Drosophila melanogaster (Fruit fly).